A 342-amino-acid chain; its full sequence is Paired box protein Pax-9 (342 aa).

Residues 4 to 130 (AFGEVNQLGG…SSISRILRNK (127 aa)) constitute a DNA-binding region (paired). Positions 7-63 (EVNQLGGVFVNGRPLPNAIRLRIVELAQLGIRPCDISRQLRVSHGCVSKILARYNET) are PAI subdomain. An RED subdomain region spans residues 82–130 (TVVKHIRTYKQRDPGIFAWEIRDRLLADGVCDKYNVPSVSSISRILRNK). Residues 168 to 189 (AAAAKVPTPPGVPAIPGSVALP) form an interaction with KDM5B region.

Interacts with KDM5B.

The protein resides in the nucleus. Functionally, transcription factor required for normal development of thymus, parathyroid glands, ultimobranchial bodies, teeth, skeletal elements of skull and larynx as well as distal limbs. The polypeptide is Paired box protein Pax-9 (Rattus norvegicus (Rat)).